The chain runs to 280 residues: Putative pyruvate, phosphate dikinase regulatory protein (280 aa).

An ADP-binding site is contributed by 158–165 (GVSRTSKT).

Belongs to the pyruvate, phosphate/water dikinase regulatory protein family. PDRP subfamily.

It carries out the reaction N(tele)-phospho-L-histidyl/L-threonyl-[pyruvate, phosphate dikinase] + ADP = N(tele)-phospho-L-histidyl/O-phospho-L-threonyl-[pyruvate, phosphate dikinase] + AMP + H(+). The enzyme catalyses N(tele)-phospho-L-histidyl/O-phospho-L-threonyl-[pyruvate, phosphate dikinase] + phosphate + H(+) = N(tele)-phospho-L-histidyl/L-threonyl-[pyruvate, phosphate dikinase] + diphosphate. Bifunctional serine/threonine kinase and phosphorylase involved in the regulation of the pyruvate, phosphate dikinase (PPDK) by catalyzing its phosphorylation/dephosphorylation. The sequence is that of Putative pyruvate, phosphate dikinase regulatory protein from Lactobacillus gasseri (strain ATCC 33323 / DSM 20243 / BCRC 14619 / CIP 102991 / JCM 1131 / KCTC 3163 / NCIMB 11718 / NCTC 13722 / AM63).